We begin with the raw amino-acid sequence, 250 residues long: uncharacterized protein (250 aa).

This is an uncharacterized protein from Rickettsia prowazekii (strain Madrid E).